Consider the following 712-residue polypeptide: Aryl hydrocarbon receptor nuclear translocator 2 (712 aa).

Disordered stretches follow at residues 1-20 (MATP…PGSV) and 35-74 (MAGA…IERR). Arginine 42 carries the post-translational modification Omega-N-methylarginine. Over residues 63-73 (FSRENHSEIER) the composition is skewed to basic and acidic residues. One can recognise a bHLH domain in the interval 63–116 (FSRENHSEIERRRRNKMTQYITELSDMVPTCSALARKPDKLTILRMAVSHMKSM). PAS domains are found at residues 134–209 (TEQE…MTGR) and 323–393 (PVCM…VKLK). One can recognise a PAC domain in the interval 398–441 (SVMYRFRTKNREWLLIRTSSFTFQNPYSDEIEYVICTNTNVKQL). The interval 573-712 (AWTGSRPPFP…DLGMFPPFSE (140 aa)) is disordered. Composition is skewed to low complexity over residues 597 to 626 (SSHP…AYPS) and 653 to 675 (SQWQ…QPGQ).

As to quaternary structure, efficient DNA binding requires dimerization with another bHLH protein. Heterodimer with NPAS4 or SIM1. Heterodimer with the aryl hydrocarbon receptor (AHR) or the SIM1 protein. Interacts with TACC3.

The protein localises to the nucleus. Its function is as follows. Transcription factor that plays a role in the development of the hypothalamo-pituitary axis, postnatal brain growth, and visual and renal function. Specifically recognizes the xenobiotic response element (XRE). This is Aryl hydrocarbon receptor nuclear translocator 2 (Arnt2) from Rattus norvegicus (Rat).